The following is a 320-amino-acid chain: tRNA N6-adenosine threonylcarbamoyltransferase (320 aa).

Histidine 113 and histidine 117 together coordinate Fe cation. Substrate is bound by residues 143–147 (VVSGG), aspartate 176, glycine 189, aspartate 193, and asparagine 281. Residue aspartate 305 participates in Fe cation binding.

Belongs to the KAE1 / TsaD family. The cofactor is Fe(2+).

The protein localises to the cytoplasm. It catalyses the reaction L-threonylcarbamoyladenylate + adenosine(37) in tRNA = N(6)-L-threonylcarbamoyladenosine(37) in tRNA + AMP + H(+). Its function is as follows. Required for the formation of a threonylcarbamoyl group on adenosine at position 37 (t(6)A37) in tRNAs that read codons beginning with adenine. Is involved in the transfer of the threonylcarbamoyl moiety of threonylcarbamoyl-AMP (TC-AMP) to the N6 group of A37, together with TsaE and TsaB. TsaD likely plays a direct catalytic role in this reaction. This is tRNA N6-adenosine threonylcarbamoyltransferase from Mycoplasmoides gallisepticum (strain R(low / passage 15 / clone 2)) (Mycoplasma gallisepticum).